The sequence spans 427 residues: Phosphoribosylamine--glycine ligase (427 aa).

The ATP-grasp domain maps to arginine 109–glutamate 313. ATP is bound at residue valine 136 to threonine 191. Mg(2+) contacts are provided by glutamine 271, glutamate 283, and asparagine 285. Positions 271, 283, and 285 each coordinate Mn(2+).

It belongs to the GARS family. It depends on Mg(2+) as a cofactor. Mn(2+) is required as a cofactor.

It carries out the reaction 5-phospho-beta-D-ribosylamine + glycine + ATP = N(1)-(5-phospho-beta-D-ribosyl)glycinamide + ADP + phosphate + H(+). It functions in the pathway purine metabolism; IMP biosynthesis via de novo pathway; N(1)-(5-phospho-D-ribosyl)glycinamide from 5-phospho-alpha-D-ribose 1-diphosphate: step 2/2. The sequence is that of Phosphoribosylamine--glycine ligase from Methanoregula boonei (strain DSM 21154 / JCM 14090 / 6A8).